We begin with the raw amino-acid sequence, 197 residues long: Dephospho-CoA kinase (197 aa).

Residues 4–197 (RLGLTGSIGM…RQIRAGNIHA (194 aa)) enclose the DPCK domain. 12-17 (GMGKST) contributes to the ATP binding site.

The protein belongs to the CoaE family.

It localises to the cytoplasm. It catalyses the reaction 3'-dephospho-CoA + ATP = ADP + CoA + H(+). It participates in cofactor biosynthesis; coenzyme A biosynthesis; CoA from (R)-pantothenate: step 5/5. Its function is as follows. Catalyzes the phosphorylation of the 3'-hydroxyl group of dephosphocoenzyme A to form coenzyme A. The sequence is that of Dephospho-CoA kinase from Ruegeria pomeroyi (strain ATCC 700808 / DSM 15171 / DSS-3) (Silicibacter pomeroyi).